A 122-amino-acid chain; its full sequence is Large ribosomal subunit protein uL14c (122 aa).

Belongs to the universal ribosomal protein uL14 family. In terms of assembly, part of the 50S ribosomal subunit.

The protein localises to the plastid. The protein resides in the chloroplast. Functionally, binds to 23S rRNA. The chain is Large ribosomal subunit protein uL14c from Marchantia polymorpha (Common liverwort).